The chain runs to 322 residues: Pyrroline-5-carboxylate reductase (322 aa).

2 helical membrane-spanning segments follow: residues 9–29 (YPNVAILGCGKLGQALLVGLL) and 117–137 (ILISLMGGVSPGLIVEALHFW). A disordered region spans residues 302–322 (LSQSAGSHGEDNTTDSKTSRA). N-linked (GlcNAc...) asparagine glycosylation occurs at asparagine 313.

This sequence belongs to the pyrroline-5-carboxylate reductase family.

Its subcellular location is the membrane. The enzyme catalyses L-proline + NADP(+) = (S)-1-pyrroline-5-carboxylate + NADPH + 2 H(+). It catalyses the reaction L-proline + NAD(+) = (S)-1-pyrroline-5-carboxylate + NADH + 2 H(+). The protein operates within alkaloid biosynthesis. Pyrroline-5-carboxylate reductase; part of the gene cluster that mediates the biosynthesis of paraherquamide, a fungal indole alkaloid that belongs to a family of natural products containing a characteristic bicyclo[2.2.2]diazaoctane core. The first steps in the biosynthesis of paraherquamide is the production of the beta-methyl-proline precursor from L-isoleucine. They require oxidation of a terminally hydroxylated L-isoleucine to the corresponding aldehyde by enzymes which have still to be identified. Spontaneous cyclization and dehydration would yield the 4-methyl pyrolline-5-carboxylic acid, which is then reduced by the pyrroline-5-carboxylate reductase phqD leading to the beta-methyl-proline precursor. The next step of paraherquamide biosynthesis involves coupling of beta-methyl-proline and L-tryptophan by the bimodular NRPS phqB, to produce a monooxopiperazine intermediate. The reductase (R) domain of phqB utilizes NADPH for hydride transfer to reduce the thioester bond of the T domain-tethered linear dipeptide to a hemithioaminal intermediate, which spontaneously cleaves the C-S bond to release the aldehyde product. This compound undergoes spontaneous cyclization and dehydration to give a dienamine which is reverse prenylated at C-2 by the reverse prenyltransferase phqJ. The other prenyltransferase present in the cluster, phqI may be a redundant gene in the pathway. During biosynthetic assembly, the key step to produce the polycyclic core is catalyzed by the bifunctional reductase and intramolecular [4+2] Diels-Alderase, phqE, resulting in formation of the [2.2.2] diazaoctane intermediate preparaherquamide. Following formation of preparaherquamide, an indole 2,3-epoxidation-initiated pinacol-like rearrangement is catalyzed by the phqK FAD-dependent monooxygenase. The prenyltransferase phqA, the cytochrome P450 monooxygenase phqL, and the FAD-linked oxidoreductase phqH (or the cytochrome P450 monooxygenase phqM), are proposed to be involved in the formation of the pyran ring. The FAD-dependent monooxygenase phqK is likely responsible for generation of the spiro-oxindole, and the N-methylation is likely mediated by the phqN methyltransferase leading to the isolable natural product paraherquamide F. However, the order of these biosynthetic steps has still to be determined. In late-stage paraherquamide biosynthesis, the third P450 monooxygenase, phqO, is probably responsible for the C-14 hydroxylation, transforming paraherquamide F to paraherquamide G, and paraherquamide E to the final product paraherquamide A. The expansion from the 6-membered ring pyran (in paraherquamides F and G) to the 7-membered dioxepin ring (in paraherquamides A and E) represents a poorly understood but intriguing process that probably involves the 2-oxoglutarate-dependent dioxygenase phqC. Finally, the remaining members of the paraherquamide cluster, including phqI as well as phqM (or phqH), do not have a clearly prescribed role and appear to be redundant. The chain is Pyrroline-5-carboxylate reductase from Penicillium fellutanum.